The following is a 285-amino-acid chain: Phosphatidylserine decarboxylase proenzyme (285 aa).

Residues D89, H146, and S252 each act as charge relay system; for autoendoproteolytic cleavage activity in the active site. S252 acts as the Schiff-base intermediate with substrate; via pyruvic acid; for decarboxylase activity in catalysis. The residue at position 252 (S252) is a Pyruvic acid (Ser); by autocatalysis.

This sequence belongs to the phosphatidylserine decarboxylase family. PSD-B subfamily. Prokaryotic type I sub-subfamily. Heterodimer of a large membrane-associated beta subunit and a small pyruvoyl-containing alpha subunit. Pyruvate is required as a cofactor. In terms of processing, is synthesized initially as an inactive proenzyme. Formation of the active enzyme involves a self-maturation process in which the active site pyruvoyl group is generated from an internal serine residue via an autocatalytic post-translational modification. Two non-identical subunits are generated from the proenzyme in this reaction, and the pyruvate is formed at the N-terminus of the alpha chain, which is derived from the carboxyl end of the proenzyme. The autoendoproteolytic cleavage occurs by a canonical serine protease mechanism, in which the side chain hydroxyl group of the serine supplies its oxygen atom to form the C-terminus of the beta chain, while the remainder of the serine residue undergoes an oxidative deamination to produce ammonia and the pyruvoyl prosthetic group on the alpha chain. During this reaction, the Ser that is part of the protease active site of the proenzyme becomes the pyruvoyl prosthetic group, which constitutes an essential element of the active site of the mature decarboxylase.

Its subcellular location is the cell membrane. It catalyses the reaction a 1,2-diacyl-sn-glycero-3-phospho-L-serine + H(+) = a 1,2-diacyl-sn-glycero-3-phosphoethanolamine + CO2. It functions in the pathway phospholipid metabolism; phosphatidylethanolamine biosynthesis; phosphatidylethanolamine from CDP-diacylglycerol: step 2/2. Functionally, catalyzes the formation of phosphatidylethanolamine (PtdEtn) from phosphatidylserine (PtdSer). This chain is Phosphatidylserine decarboxylase proenzyme, found in Vibrio cholerae serotype O1 (strain ATCC 39541 / Classical Ogawa 395 / O395).